The chain runs to 142 residues: DNA polymerase III subunit chi (142 aa).

Belongs to the DNA polymerase III chi/HolC chain family. In terms of assembly, DNA polymerase III contains a core (composed of alpha, epsilon and theta chains) that associates with a tau subunit. This core dimerizes to form the POLIII' complex. PolIII' associates with the gamma complex (composed of gamma, delta, delta', psi and chi chains) and with the beta chain to form the complete DNA polymerase III complex. Interacts directly with the psi subunit (holD). The only subunit of the DNA polymerase III holoenzyme known to interact with single-stranded DNA binding protein (SSB).

It catalyses the reaction DNA(n) + a 2'-deoxyribonucleoside 5'-triphosphate = DNA(n+1) + diphosphate. Part of the beta sliding clamp loading complex, which hydrolyzes ATP to load the beta clamp onto primed DNA to form the DNA replication pre-initiation complex. DNA polymerase III is a complex, multichain enzyme responsible for most of the replicative synthesis in bacteria. This DNA polymerase also exhibits 3' to 5' exonuclease activity. The chain is DNA polymerase III subunit chi from Pseudomonas aeruginosa (strain ATCC 15692 / DSM 22644 / CIP 104116 / JCM 14847 / LMG 12228 / 1C / PRS 101 / PAO1).